Consider the following 277-residue polypeptide: Mitochondrial outer membrane protein porin 5 (277 aa).

The protein belongs to the eukaryotic mitochondrial porin (TC 1.B.8.1) family.

The protein localises to the mitochondrion outer membrane. Its function is as follows. Forms a channel through the mitochondrial outer membrane that allows diffusion of small hydrophilic molecules. The channel adopts an open conformation at low or zero membrane potential and a closed conformation at potentials above 30-40 mV. The open state has a weak anion selectivity whereas the closed state is cation-selective. This chain is Mitochondrial outer membrane protein porin 5 (VDAC5), found in Oryza sativa subsp. japonica (Rice).